We begin with the raw amino-acid sequence, 387 residues long: uncharacterized protein (387 aa).

Residues 5–25 (FVLFSFPFLLLSSMLIFYQTT) form a helical membrane-spanning segment.

Belongs to the LicD transferase family.

The protein localises to the membrane. This is an uncharacterized protein from Caenorhabditis elegans.